The primary structure comprises 127 residues: Large ribosomal subunit protein eL8 (127 aa).

This sequence belongs to the eukaryotic ribosomal protein eL8 family. Part of the 50S ribosomal subunit. Probably part of the RNase P complex.

The protein localises to the cytoplasm. Its function is as follows. Multifunctional RNA-binding protein that recognizes the K-turn motif in ribosomal RNA, the RNA component of RNase P, box H/ACA, box C/D and box C'/D' sRNAs. This chain is Large ribosomal subunit protein eL8, found in Saccharolobus islandicus (strain Y.N.15.51 / Yellowstone #2) (Sulfolobus islandicus).